We begin with the raw amino-acid sequence, 401 residues long: ATP phosphoribosyltransferase regulatory subunit (401 aa).

Residues 373–401 form a disordered region; that stretch reads PGQQGGAAAQGCDRRLQQDDGGGWVTRPL. A compositionally biased stretch (gly residues) spans 392-401; the sequence is DGGGWVTRPL.

The protein belongs to the class-II aminoacyl-tRNA synthetase family. HisZ subfamily. As to quaternary structure, heteromultimer composed of HisG and HisZ subunits.

The protein resides in the cytoplasm. Its pathway is amino-acid biosynthesis; L-histidine biosynthesis; L-histidine from 5-phospho-alpha-D-ribose 1-diphosphate: step 1/9. Required for the first step of histidine biosynthesis. May allow the feedback regulation of ATP phosphoribosyltransferase activity by histidine. The sequence is that of ATP phosphoribosyltransferase regulatory subunit from Alkalilimnicola ehrlichii (strain ATCC BAA-1101 / DSM 17681 / MLHE-1).